The chain runs to 711 residues: Polyribonucleotide nucleotidyltransferase (711 aa).

Mg(2+) contacts are provided by aspartate 486 and aspartate 492. Positions 553–612 constitute a KH domain; the sequence is PRIHTIKISTDKIKDVIGKGGSVIRALTEETGTTIEIEDDGTVKIAATDGEKAKYAIRRI. Residues 622–690 form the S1 motif domain; that stretch reads GRIYNSKVTR…RQGRVRLSIK (69 aa). A disordered region spans residues 689 to 711; it reads IKEATEQSQPAAAPEAPASEQAE. The span at 694–711 shows a compositional bias: low complexity; the sequence is EQSQPAAAPEAPASEQAE.

This sequence belongs to the polyribonucleotide nucleotidyltransferase family. Component of the RNA degradosome, which is a multiprotein complex involved in RNA processing and mRNA degradation. Mg(2+) serves as cofactor.

It is found in the cytoplasm. The catalysed reaction is RNA(n+1) + phosphate = RNA(n) + a ribonucleoside 5'-diphosphate. Involved in mRNA degradation. Catalyzes the phosphorolysis of single-stranded polyribonucleotides processively in the 3'- to 5'-direction. This Salmonella typhi protein is Polyribonucleotide nucleotidyltransferase.